The sequence spans 246 residues: Anionic trypsin-2 (246 aa).

An N-terminal signal peptide occupies residues 1–15 (MSALLILALVGAAVA). The propeptide at 16–23 (FPVDDDDK) is activation peptide. The Peptidase S1 domain maps to 24–244 (IVGGYTCRES…YVDWIQNTIA (221 aa)). 6 disulfide bridges follow: C30–C160, C48–C64, C132–C233, C139–C206, C171–C185, and C196–C220. H63 acts as the Charge relay system in catalysis. Ca(2+)-binding residues include E75, N77, V80, and E85. The active-site Charge relay system is the D107. S200 acts as the Charge relay system in catalysis.

It belongs to the peptidase S1 family. Ca(2+) is required as a cofactor. Expressed in the pancreas, lung and kidney.

It is found in the secreted. The protein resides in the extracellular space. It carries out the reaction Preferential cleavage: Arg-|-Xaa, Lys-|-Xaa.. This is Anionic trypsin-2 (Prss2) from Mus musculus (Mouse).